Reading from the N-terminus, the 487-residue chain is MDYLVTIGLEIHAQILTRSKMFCGCSADYADAPPNTHVCPVCMGLPGALPTPNRRAIELAALTGLALNCRISHTNVISRKNYFYADLPSGYQRSQYDDPLCVDGWVEIEGDSGPKRIRLTRVHIEEDTGKLIHTNDGGSLVDFNRAGVPLMEIVSKPDISSPEEARRYFQKLRQILVWIGVNSGDMESGALRCDANVSVRPAGQQEYGAKVEIKNINSFRFVERALAYEIERQIRALKAGEPIVQSTRGWDEVSGTTVAQRTKEFAEDYRYFPEPDIPPLHLTDAWIDERRAELPELPDARRIRFIEEYGLTAYDAGVLTDERTVSDYYEQAVAAARTRGVMPKEVANWLTGEFFRLLKETGESPAHAAQRMRPEYIGEVQELLNNGVITRTSAKEAFEAAFREGRSPAVIVAERGLAVIGAGDALTDLVRQVIAGNPKVVEEYRRGKATAIKYLIGQVMKATRGQANPQAVQQALEQELAREQAAC.

It belongs to the GatB/GatE family. GatB subfamily. As to quaternary structure, heterotrimer of A, B and C subunits.

It carries out the reaction L-glutamyl-tRNA(Gln) + L-glutamine + ATP + H2O = L-glutaminyl-tRNA(Gln) + L-glutamate + ADP + phosphate + H(+). It catalyses the reaction L-aspartyl-tRNA(Asn) + L-glutamine + ATP + H2O = L-asparaginyl-tRNA(Asn) + L-glutamate + ADP + phosphate + 2 H(+). Allows the formation of correctly charged Asn-tRNA(Asn) or Gln-tRNA(Gln) through the transamidation of misacylated Asp-tRNA(Asn) or Glu-tRNA(Gln) in organisms which lack either or both of asparaginyl-tRNA or glutaminyl-tRNA synthetases. The reaction takes place in the presence of glutamine and ATP through an activated phospho-Asp-tRNA(Asn) or phospho-Glu-tRNA(Gln). The sequence is that of Aspartyl/glutamyl-tRNA(Asn/Gln) amidotransferase subunit B from Roseiflexus sp. (strain RS-1).